The chain runs to 213 residues: MVPSVVFWGLIALVGTAKGSYTHSVHSMNPHVHPRLYHGCYGDIMTMETFGAPCDINNLMNCGIHGSEMFAEMDLKAIKPYRILIKEVGQRHCIDPALIAAIISRESHGGAVLQNGWDHKGQRFGLMQLDKNMYHPIGSWDSKEHLLQSVGILTERIKAMKRKFPTWNTAQQLKGGLTAFKSGMETIVTPADIDGDLVDDVLARAKFYKRHGF.

Residues 1 to 19 (MVPSVVFWGLIALVGTAKG) form the signal peptide. Disulfide bonds link Cys40-Cys93 and Cys54-Cys62. Residue Glu106 is part of the active site.

This sequence belongs to the glycosyl hydrolase 23 family.

Its subcellular location is the secreted. Its function is as follows. May act as a potent antibacterial protein that may play a role in the innate immunity. The polypeptide is Lysozyme g-like protein 2 (Lyg2) (Mus musculus (Mouse)).